The following is a 320-amino-acid chain: Cytochrome f (320 aa).

The first 35 residues, 1–35 (MQTRNNFSWIKEQITRSISVSLMIYIITRASISNA), serve as a signal peptide directing secretion. Heme-binding residues include Tyr-36, Cys-56, Cys-59, and His-60. Residues 286–306 (VQGLLFFLASVILAQIFLVLK) form a helical membrane-spanning segment.

It belongs to the cytochrome f family. In terms of assembly, the 4 large subunits of the cytochrome b6-f complex are cytochrome b6, subunit IV (17 kDa polypeptide, petD), cytochrome f and the Rieske protein, while the 4 small subunits are PetG, PetL, PetM and PetN. The complex functions as a dimer. The cofactor is heme.

It localises to the plastid. The protein localises to the chloroplast thylakoid membrane. Its function is as follows. Component of the cytochrome b6-f complex, which mediates electron transfer between photosystem II (PSII) and photosystem I (PSI), cyclic electron flow around PSI, and state transitions. This Lactuca sativa (Garden lettuce) protein is Cytochrome f.